The sequence spans 103 residues: Cell division suppressor protein YneA (103 aa).

The LysM domain occupies 36–87 (VKIKVQDGDTLWSLADHVAEKKHINKEDFIEWVTENNHLQTADIKPGDELIL).

It belongs to the YneA family.

It is found in the cytoplasm. Its function is as follows. Inhibits cell division during the SOS response. Affects a later stage of the cell division protein assembly, after the assembly of the Z ring, by probably suppressing recruitment of FtsL and/or DivIC to the division machinery. The chain is Cell division suppressor protein YneA from Bacillus velezensis (strain DSM 23117 / BGSC 10A6 / LMG 26770 / FZB42) (Bacillus amyloliquefaciens subsp. plantarum).